A 235-amino-acid chain; its full sequence is tRNA (guanine-N(7)-)-methyltransferase (235 aa).

S-adenosyl-L-methionine contacts are provided by residues Gly-60, 83–84, 116–117, and Leu-136; these read EI and NA. Residue Asp-139 is part of the active site. 214–216 contributes to the S-adenosyl-L-methionine binding site; that stretch reads SEE.

Belongs to the class I-like SAM-binding methyltransferase superfamily. TrmB family.

The protein resides in the nucleus. It catalyses the reaction guanosine(46) in tRNA + S-adenosyl-L-methionine = N(7)-methylguanosine(46) in tRNA + S-adenosyl-L-homocysteine. Its pathway is tRNA modification; N(7)-methylguanine-tRNA biosynthesis. Its function is as follows. Catalyzes the formation of N(7)-methylguanine at position 46 (m7G46) in tRNA. The polypeptide is tRNA (guanine-N(7)-)-methyltransferase (Anopheles gambiae (African malaria mosquito)).